The chain runs to 386 residues: IgA receptor (386 aa).

A signal peptide spans 1–41; sequence MARKDTNKQYSLRKLKTGTASVAVAVAVLGAGFANQTEVKA. An igA-binding region spans residues 42 to 152; it reads AEIKKPQADS…QKKHQQEQQQ (111 aa). Basic and acidic residues-rich tracts occupy residues 79–88, 97–128, 134–166, 174–201, 209–221, 233–243, and 251–267; these read YADDKEKDPQ, QDLRKREGQYQDKIEELEKERKEKQERQEQLE, EADKHYQEQQKKHQQEQQQLEAEKQKLAKDKQI, LSRDLEASRAAKKELEAEHQKLKEEKQI, LSRDLEASREAKK, EHQKLKEDKQI, and LSRDLEASREAKKKVEA. 2 disordered regions span residues 79–221 and 233–268; these read YADD…EAKK and EHQKLKEDKQISDASRQGLSRDLEASREAKKKVEAD. C repeat units follow at residues 158–192, 193–227, and 235–269; these read QKLAKDKQISDASRQGLSRDLEASRAAKKELEAEH, QKLKEEKQISDASRQGLSRDLEASREAKKKVEADL, and QKLKEDKQISDASRQGLSRDLEASREAKKKVEADL. D repeat units lie at residues 302 to 307, 308 to 313, 316 to 321, and 323 to 328; these read ARLEAE, AKALKE, AKQAEE, and AKLKGN. Residues 323-360 form a disordered region; the sequence is AKLKGNQTPNAKVAPQANRSRSAMTQQKRTLPSTGETA. A compositionally biased stretch (polar residues) spans 339 to 359; sequence ANRSRSAMTQQKRTLPSTGET. The short motif at 353–357 is the LPXTG sorting signal element; sequence LPSTG. A Pentaglycyl murein peptidoglycan amidated threonine modification is found at Thr-356. A propeptide spans 357–386 (removed by sortase); it reads GETANPFFTAAAATVMVSAGMLALKRKEEN.

Belongs to the M protein family.

Its subcellular location is the secreted. The protein resides in the cell wall. In terms of biological role, binds IgA of both subclasses, and also binds polyclonal IgG weakly. In Streptococcus pyogenes, this protein is IgA receptor (arp4).